We begin with the raw amino-acid sequence, 457 residues long: MIFLPVTSVVFAISWIYSGVSAFNPYSSTPYSLKYVDEQEFLSVIDNETLLQEGRLFRPYEGSDVLCYQRNTSSLIQHHEEDTFNSEGALIEAVNMVNAILAPNPIEMNTVPISYWTYIISSGETRTVVQKGYFGETYLLGNSSNYNSTIDYHFAKSKTGRVYLSETLVDGCTCDLTHKPREVEIQYICPKRPLSRPFHLEVREIQSCKYQLRLFLPQLCELSSFNPLLGQLSEHNIICHRSGSKLSPALDIFNRYSATVLDHGIYLLKPKNSAKDRRQLMYHAAEPLDSQTTLFELTVEERFIGDFISSLKKLIGSDFIQSPTGKSIKPGDLFLWRAPVVDETGNLLFLIDLELNSASEAIGKVNNDASLLNELPIHNMVYFDSMTVNQTDETSSNSLPEKSTGLVPDIFATDEIESPYKGGTAQELKDKLMEAFRDIGYPDIEVEILEEVVEEQN.

An N-terminal signal peptide occupies residues 1–22 (MIFLPVTSVVFAISWIYSGVSA). N-linked (GlcNAc...) asparagine glycans are attached at residues Asn47 and Asn71. Residues 104 to 222 (NPIEMNTVPI…RLFLPQLCEL (119 aa)) form the MRH domain. Residue Trp116 coordinates a mannooligosaccharide derivative. Asn142 and Asn147 each carry an N-linked (GlcNAc...) asparagine glycan. Cystine bridges form between Cys174/Cys208 and Cys189/Cys220. Residues Asp175, Arg181, Glu204, and Tyr210 each coordinate a mannooligosaccharide derivative. The N-linked (GlcNAc...) asparagine glycan is linked to Asn389.

This sequence belongs to the OS-9 family. As to quaternary structure, interacts with missfolded ER lumenal proteins.

Its subcellular location is the endoplasmic reticulum membrane. In terms of biological role, lectin involved in the quality control of the secretory pathway. As a member of the endoplasmic reticulum-associated degradation lumenal (ERAD-L) surveillance system, targets misfolded endoplasmic reticulum lumenal glycoproteins for degradation. This chain is Protein OS-9 homolog (YOS9), found in Kluyveromyces lactis (strain ATCC 8585 / CBS 2359 / DSM 70799 / NBRC 1267 / NRRL Y-1140 / WM37) (Yeast).